Here is a 679-residue protein sequence, read N- to C-terminus: Protein hook (679 aa).

Residues asparagine 6–alanine 123 enclose the Calponin-homology (CH) domain. Coiled coils occupy residues glutamate 135–glycine 437 and glutamine 480–leucine 574.

It belongs to the hook family. Homodimer. Interacts with microtubules via its N-terminus.

It localises to the cytoplasm. Its subcellular location is the cytoskeleton. The protein resides in the endosome. The protein localises to the synapse. Involved in endocytic trafficking by stabilizing organelles of the endocytic pathway. Probably acts as a cytoskeletal linker protein required to tether endosome vesicles to the cytoskeleton. Involved in modulation of endocytosis at stages required for down-regulation of membrane proteins that control synapse size. Not involved in synaptic vesicle recycling. Required in R7 cells for boss endocytosis into multivesicular bodies (MVBs). Has a role in regulating adult longevity. This chain is Protein hook, found in Drosophila sechellia (Fruit fly).